Here is a 164-residue protein sequence, read N- to C-terminus: MALKSKFLVGSILATFILNGFSSPAQALELDEDTRTVTLDGKGNTVVLSVEQIKRGKRLFNNACAICHVGGLTKTNPNVGLDVEALSLATPPRDNVSSLVSYLKDPMTYDGADSIAELHPSIKSADIFPKMRSLTDEDLFAISGHILVQPKVVNEKWGGGKIYY.

Positions 1–27 (MALKSKFLVGSILATFILNGFSSPAQA) are cleaved as a signal peptide. 4 residues coordinate heme c: C64, C67, H68, and H119.

The protein belongs to the cytochrome c family. PsbV subfamily. In terms of assembly, PSII is composed of 1 copy each of membrane proteins PsbA, PsbB, PsbC, PsbD, PsbE, PsbF, PsbH, PsbI, PsbJ, PsbK, PsbL, PsbM, PsbT, PsbY, PsbZ, Psb30/Ycf12, at least 3 peripheral proteins of the oxygen-evolving complex and a large number of cofactors. It forms dimeric complexes. Heme c is required as a cofactor.

It localises to the plastid. It is found in the chloroplast thylakoid membrane. Its function is as follows. One of the extrinsic, lumenal subunits of photosystem II (PSII). PSII is a light-driven water plastoquinone oxidoreductase, using light energy to abstract electrons from H(2)O, generating a proton gradient subsequently used for ATP formation. The extrinsic proteins stabilize the structure of photosystem II oxygen-evolving complex (OEC), the ion environment of oxygen evolution and protect the OEC against heat-induced inactivation. In Emiliania huxleyi (Coccolithophore), this protein is Photosystem II extrinsic protein V.